Reading from the N-terminus, the 55-residue chain is ATP synthase protein 8 (55 aa).

The chain crosses the membrane as a helical span at residues 7–24; sequence NPWLFIMLMSWLTFSLII. The interval 35 to 55 is disordered; the sequence is NPPSNKTPTTTKTSPWTWPWT. Low complexity predominate over residues 37-55; that stretch reads PSNKTPTTTKTSPWTWPWT.

This sequence belongs to the ATPase protein 8 family. As to quaternary structure, F-type ATPases have 2 components, CF(1) - the catalytic core - and CF(0) - the membrane proton channel.

It is found in the mitochondrion membrane. Mitochondrial membrane ATP synthase (F(1)F(0) ATP synthase or Complex V) produces ATP from ADP in the presence of a proton gradient across the membrane which is generated by electron transport complexes of the respiratory chain. F-type ATPases consist of two structural domains, F(1) - containing the extramembraneous catalytic core and F(0) - containing the membrane proton channel, linked together by a central stalk and a peripheral stalk. During catalysis, ATP synthesis in the catalytic domain of F(1) is coupled via a rotary mechanism of the central stalk subunits to proton translocation. Part of the complex F(0) domain. Minor subunit located with subunit a in the membrane. This is ATP synthase protein 8 (MT-ATP8) from Corythaeola cristata (Great blue turaco).